A 134-amino-acid polypeptide reads, in one-letter code: Retinoid-binding protein 7 (134 aa).

This sequence belongs to the calycin superfamily. Fatty-acid binding protein (FABP) family. Highly expressed in white adipose tissue and mammary gland.

The protein localises to the cytoplasm. Intracellular transport of retinol. This Mus musculus (Mouse) protein is Retinoid-binding protein 7 (Rbp7).